The primary structure comprises 138 residues: Large ribosomal subunit protein uL16 (138 aa).

Residues 1 to 13 (MLQPARRKYRKEQ) are compositionally biased toward basic residues. Positions 1–21 (MLQPARRKYRKEQKGRNTGIA) are disordered.

This sequence belongs to the universal ribosomal protein uL16 family. Part of the 50S ribosomal subunit.

Its function is as follows. Binds 23S rRNA and is also seen to make contacts with the A and possibly P site tRNAs. This chain is Large ribosomal subunit protein uL16, found in Albidiferax ferrireducens (strain ATCC BAA-621 / DSM 15236 / T118) (Rhodoferax ferrireducens).